The chain runs to 132 residues: Auxin-responsive protein SAUR72 (132 aa).

Residues 22–54 form a disordered region; it reads SDSQRPSRRSESFLRSSVTRRSKKQTSSVPEGH. The segment covering 23–33 has biased composition (basic and acidic residues); that stretch reads DSQRPSRRSES.

The protein belongs to the ARG7 family. Interacts with and inhibits PP2C-D subfamily of type 2C phosphatases such as PP2C67/PP2C-D1. As to expression, highly expressed in the steles of roots and hypocotyls.

It localises to the cytoplasm. Provide a mechanistic link between auxin and plasma membrane H(+)-ATPases (PM H(+)-ATPases, e.g. AHA1 and AHA2), and triggers PM H(+)-ATPases activity by promoting phosphorylation of their C-terminal autoinhibitory domain as a result of PP2C-D subfamily of type 2C phosphatases inhibition, thus leading to the acidification of the apoplast and the facilitation of solutes and water uptake to drive cell expansion. Plays a role in the regulation of cell expansion, root meristem patterning and auxin transport. In Arabidopsis thaliana (Mouse-ear cress), this protein is Auxin-responsive protein SAUR72.